Consider the following 165-residue polypeptide: Ribosome maturation factor RimM (165 aa).

Positions 90–161 (EDEYFIVDLV…LITIRPSGEW (72 aa)) constitute a PRC barrel domain.

Belongs to the RimM family. Binds ribosomal protein uS19.

It is found in the cytoplasm. An accessory protein needed during the final step in the assembly of 30S ribosomal subunit, possibly for assembly of the head region. Essential for efficient processing of 16S rRNA. May be needed both before and after RbfA during the maturation of 16S rRNA. It has affinity for free ribosomal 30S subunits but not for 70S ribosomes. This is Ribosome maturation factor RimM from Clostridium perfringens (strain SM101 / Type A).